The primary structure comprises 694 residues: Soluble starch synthase 2-2, chloroplastic/amyloplastic (694 aa).

The N-terminal 15 residues, 1–15 (MSGAIASSPAATLFL), are a transit peptide targeting the chloroplast. The interval 93–197 (KADHVEDSVS…DSENKESGPL (105 aa)) is disordered. The segment covering 127–142 (APVSKPKVDPSVPASK) has biased composition (low complexity). Residues 156 to 176 (AALDKKEDVGVAEPLEAKADA) show a composition bias toward basic and acidic residues. Residues 177–186 (GGDAGAVSSA) show a composition bias toward low complexity. Lysine 217 serves as a coordination point for ADP-alpha-D-glucose.

It belongs to the glycosyltransferase 1 family. Bacterial/plant glycogen synthase subfamily. In terms of tissue distribution, expressed in leaves and weakly in endosperm and roots.

It localises to the plastid. Its subcellular location is the amyloplast. The protein resides in the chloroplast. It catalyses the reaction [(1-&gt;4)-alpha-D-glucosyl](n) + ADP-alpha-D-glucose = [(1-&gt;4)-alpha-D-glucosyl](n+1) + ADP + H(+). The protein operates within glycan biosynthesis; starch biosynthesis. Its function is as follows. May contribute to the deposition of transient starch in chloroplasts of leaves. In Oryza sativa subsp. japonica (Rice), this protein is Soluble starch synthase 2-2, chloroplastic/amyloplastic (SSII-2).